The sequence spans 394 residues: Dual-specificity RNA methyltransferase RlmN (394 aa).

The Proton acceptor role is filled by Glu-92. In terms of domain architecture, Radical SAM core spans 98–341 (ENDRGTLCIS…TTVRRTRGDD (244 aa)). A disulfide bond links Cys-105 and Cys-346. [4Fe-4S] cluster contacts are provided by Cys-112, Cys-116, and Cys-119. S-adenosyl-L-methionine contacts are provided by residues 166–167 (GE), Ser-198, 220–222 (SLH), and Asn-303. Catalysis depends on Cys-346, which acts as the S-methylcysteine intermediate. Residues 374-394 (DSAVQRRADAAPSGSATETTR) are disordered.

It belongs to the radical SAM superfamily. RlmN family. [4Fe-4S] cluster serves as cofactor.

Its subcellular location is the cytoplasm. It carries out the reaction adenosine(2503) in 23S rRNA + 2 reduced [2Fe-2S]-[ferredoxin] + 2 S-adenosyl-L-methionine = 2-methyladenosine(2503) in 23S rRNA + 5'-deoxyadenosine + L-methionine + 2 oxidized [2Fe-2S]-[ferredoxin] + S-adenosyl-L-homocysteine. The enzyme catalyses adenosine(37) in tRNA + 2 reduced [2Fe-2S]-[ferredoxin] + 2 S-adenosyl-L-methionine = 2-methyladenosine(37) in tRNA + 5'-deoxyadenosine + L-methionine + 2 oxidized [2Fe-2S]-[ferredoxin] + S-adenosyl-L-homocysteine. In terms of biological role, specifically methylates position 2 of adenine 2503 in 23S rRNA and position 2 of adenine 37 in tRNAs. m2A2503 modification seems to play a crucial role in the proofreading step occurring at the peptidyl transferase center and thus would serve to optimize ribosomal fidelity. This chain is Dual-specificity RNA methyltransferase RlmN, found in Methylibium petroleiphilum (strain ATCC BAA-1232 / LMG 22953 / PM1).